The sequence spans 430 residues: Replication factor C large subunit (430 aa).

ATP is bound at residue 75–82 (GPPGTGKT).

It belongs to the activator 1 small subunits family. RfcL subfamily. In terms of assembly, heteromultimer composed of small subunits (RfcS) and large subunits (RfcL).

Part of the RFC clamp loader complex which loads the PCNA sliding clamp onto DNA. The polypeptide is Replication factor C large subunit (Nanoarchaeum equitans (strain Kin4-M)).